Here is an 882-residue protein sequence, read N- to C-terminus: Alanine--tRNA ligase (882 aa).

H570, H574, C672, and H676 together coordinate Zn(2+).

It belongs to the class-II aminoacyl-tRNA synthetase family. Requires Zn(2+) as cofactor.

It is found in the cytoplasm. It catalyses the reaction tRNA(Ala) + L-alanine + ATP = L-alanyl-tRNA(Ala) + AMP + diphosphate. Functionally, catalyzes the attachment of alanine to tRNA(Ala) in a two-step reaction: alanine is first activated by ATP to form Ala-AMP and then transferred to the acceptor end of tRNA(Ala). Also edits incorrectly charged Ser-tRNA(Ala) and Gly-tRNA(Ala) via its editing domain. The polypeptide is Alanine--tRNA ligase (Xanthomonas euvesicatoria pv. vesicatoria (strain 85-10) (Xanthomonas campestris pv. vesicatoria)).